Consider the following 206-residue polypeptide: MARYLGPKLKLSRREGTDLFLKSGVRAIDTKCKIEQPPGQHGARKPRLSDYGVQLREKQKVRRMYGVLERQFRNYYKEAARLKGNTGANLLQLLEGRLDNVVYRMGFGATRSESRQLVSHKAIMVNGRVVNIASYQVSPNDVVSIREKAKKQSRVKASLELAEQREKPTWLEVDAAKMEGVFKRMPERTDLSADINEHLIVELYSK.

The S4 RNA-binding domain occupies 96–156; it reads GRLDNVVYRM…EKAKKQSRVK (61 aa).

The protein belongs to the universal ribosomal protein uS4 family. As to quaternary structure, part of the 30S ribosomal subunit. Contacts protein S5. The interaction surface between S4 and S5 is involved in control of translational fidelity.

Its function is as follows. One of the primary rRNA binding proteins, it binds directly to 16S rRNA where it nucleates assembly of the body of the 30S subunit. With S5 and S12 plays an important role in translational accuracy. This is Small ribosomal subunit protein uS4 from Serratia proteamaculans (strain 568).